We begin with the raw amino-acid sequence, 67 residues long: Stomoxyn (67 aa).

The signal sequence occupies residues 1–24 (MNFYKYLVVLVVLVLCLSATQTEA). T66 is modified (threonine amide).

In terms of tissue distribution, constitutively expressed in the adult anterior midgut; proventriculus, thoracic and reservoir regions.

The protein localises to the secreted. Functionally, has antimicrobial activity against most Gram-positive and Gram-negative bacteria, filamentous fungi and yeasts tested. Has trypanolytic effect on T.b.rhodesiense and limited hemolytic activity against bovine red blood cells. May play an important role in protecting the stored blood in the anterior midgut from microorganisms prior to digestion. Adopts an amphipathic alpha-helical structure only in the presence of an organic solvent that mimics a phospholipid membrane. The protein is Stomoxyn of Stomoxys calcitrans (Stable fly).